We begin with the raw amino-acid sequence, 238 residues long: Dolichyldiphosphatase 1 (238 aa).

Transmembrane regions (helical) follow at residues 33–53 (LAYL…LIIF), 100–120 (PSSH…FLYL), 130–150 (FLDL…AFLV), and 162–182 (WSQV…WFII).

This sequence belongs to the dolichyldiphosphatase family. Widely expressed with highest levels in brain, kidney, lung and intestine.

The protein resides in the endoplasmic reticulum membrane. It carries out the reaction a di-trans,poly-cis-dolichyl diphosphate + H2O = a di-trans,poly-cis-dolichyl phosphate + phosphate + H(+). It participates in protein modification; protein glycosylation. Required for efficient N-glycosylation. Necessary for maintaining optimal levels of dolichol-linked oligosaccharides. Hydrolyzes dolichyl pyrophosphate at a very high rate and dolichyl monophosphate at a much lower rate. Does not act on phosphatidate. This Mus musculus (Mouse) protein is Dolichyldiphosphatase 1 (Dolpp1).